The primary structure comprises 435 residues: ATP-dependent RNA helicase SUB2 (435 aa).

A disordered region spans residues 1–40 (MSHEGQEELLDYSDSEEIAVPTTTAPSAAAGEGANDKEAD). Residues 7–17 (EELLDYSDSEE) show a composition bias toward acidic residues. Residues 19–33 (AVPTTTAPSAAAGEG) are compositionally biased toward low complexity. The Q motif signature appears at 51–79 (TGFRDFLLKPELLRAIGDCGFEHPSEVQQ). Residues 82–257 (IPQSILGTDV…KKFMQNPLEI (176 aa)) form the Helicase ATP-binding domain. An ATP-binding site is contributed by 95–102 (AKSGLGKT). The DECD box signature appears at 204 to 207 (DECD). Residues 269-430 (GLQQYYIKLD…EFPEEGVDPS (162 aa)) enclose the Helicase C-terminal domain.

The protein belongs to the DEAD box helicase family. DECD subfamily.

The protein resides in the nucleus. It carries out the reaction ATP + H2O = ADP + phosphate + H(+). In terms of biological role, ATP-binding RNA helicase involved in transcription elongation and required for the export of mRNA out of the nucleus. SUB2 also plays a role in pre-mRNA splicing and spliceosome assembly. May be involved in rDNA and telomeric silencing, and maintenance of genome integrity. The polypeptide is ATP-dependent RNA helicase SUB2 (SUB2) (Debaryomyces hansenii (strain ATCC 36239 / CBS 767 / BCRC 21394 / JCM 1990 / NBRC 0083 / IGC 2968) (Yeast)).